An 89-amino-acid chain; its full sequence is MSRSLKKGPYINVKLEKKVLAMNESGKKVVVKTWSRASMISPDFVGHTVAVHNGNKFIPVYVTENMVGHKLGEFAPTRTFRGHAGNKKK.

It belongs to the universal ribosomal protein uS19 family.

Functionally, protein S19 forms a complex with S13 that binds strongly to the 16S ribosomal RNA. This chain is Small ribosomal subunit protein uS19, found in Bacteroides fragilis (strain YCH46).